The primary structure comprises 218 residues: GTP cyclohydrolase 1 (218 aa).

Residues Cys-109, His-112, and Cys-180 each contribute to the Zn(2+) site.

It belongs to the GTP cyclohydrolase I family. In terms of assembly, toroid-shaped homodecamer, composed of two pentamers of five dimers.

The enzyme catalyses GTP + H2O = 7,8-dihydroneopterin 3'-triphosphate + formate + H(+). It functions in the pathway cofactor biosynthesis; 7,8-dihydroneopterin triphosphate biosynthesis; 7,8-dihydroneopterin triphosphate from GTP: step 1/1. This chain is GTP cyclohydrolase 1, found in Aeromonas hydrophila subsp. hydrophila (strain ATCC 7966 / DSM 30187 / BCRC 13018 / CCUG 14551 / JCM 1027 / KCTC 2358 / NCIMB 9240 / NCTC 8049).